Reading from the N-terminus, the 142-residue chain is Hemoglobin subunit alpha-1 (142 aa).

The 141-residue stretch at 2-142 (KLTAEDKHNV…VAYVLASKYR (141 aa)) folds into the Globin domain. Residue histidine 59 participates in O2 binding. Histidine 88 serves as a coordination point for heme b.

Belongs to the globin family. Major hemoglobin is a heterotetramer of two alpha-1 chains and two beta-1 chains. As to expression, red blood cells.

Involved in oxygen transport from the lung to the various peripheral tissues. In Pleurodeles waltl (Iberian ribbed newt), this protein is Hemoglobin subunit alpha-1.